Reading from the N-terminus, the 182-residue chain is uncharacterized protein (182 aa).

Residues 40–182 (LLKTDDDDDD…EEIQRNQKGN (143 aa)) form a disordered region. Residues 52 to 86 (NNININNNNATITTTSTTTTTTTTSTTKTFTISTD) show a composition bias toward low complexity. The segment covering 87–100 (NYDEDVNDDQDEGD) has biased composition (acidic residues). 2 stretches are compositionally biased toward low complexity: residues 104–134 (NNNN…NNNN) and 148–157 (DLDFNNQNNN). The segment covering 165 to 182 (FLSKDDNIEEIQRNQKGN) has biased composition (basic and acidic residues).

This is an uncharacterized protein from Dictyostelium discoideum (Social amoeba).